Reading from the N-terminus, the 379-residue chain is Dihydroflavonol 4-reductase (379 aa).

NADP(+)-binding residues include Lys-56 and Tyr-175.

This sequence belongs to the NAD(P)-dependent epimerase/dehydratase family. Dihydroflavonol-4-reductase subfamily. Expressed in both leaf and hypocotyl tissues.

It carries out the reaction a (2R,3S,4S)-leucoanthocyanidin + NADP(+) = a (2R,3R)-dihydroflavonol + NADPH + H(+). The catalysed reaction is (2S)-flavan-4-ol + NADP(+) = (2S)-flavanone + NADPH + H(+). It functions in the pathway pigment biosynthesis; anthocyanin biosynthesis. Functionally, bifunctional enzyme involved in flavonoid metabolism. This Solanum lycopersicum (Tomato) protein is Dihydroflavonol 4-reductase.